The following is an 800-amino-acid chain: MTRNKFIPNKFSIISFSVLLFAISSSQAIEVNAMNEHYTESDIKRNHKTEKNKTEKEKFKDSINNLVKTEFTNETLDKIQQTQDLLKKIPKDVLEIYSELGGEIYFTDIDLVEHKELQDLSEEEKNSMNSRGEKVPFASRFVFEKKRETPKLIINIKDYAINSEQSKEVYYEIGKGISLDIISKDKSLDPEFLNLIKSLSDDSDSSDLLFSQKFKEKLELNNKSIDINFIKENLTEFQHAFSLAFSYYFAPDHRTVLELYAPDMFEYMNKLEKGGFEKISESLKKEGVEKDRIDVLKGEKALKASGLVPEHADAFKKIARELNTYILFRPVNKLATNLIKSGVATKGLNVHGKSSDWGPVAGYIPFDQDLSKKHGQQLAVEKGNLENKKSITEHEGEIGKIPLKLDHLRIEELKENGIILKGKKEIDNGKKYYLLESNNQVYEFRISDENNEVQYKTKEGKITVLGEKFNWRNIEVMAKNVEGVLKPLTADYDLFALAPSLTEIKKQIPQKEWDKVVNTPNSLEKQKGVTNLLIKYGIERKPDSTKGTLSNWQKQMLDRLNEAVKYTGYTGGDVVNHGTEQDNEEFPEKDNEIFIINPEGEFILTKNWEMTGRFIEKNITGKDYLYYFNRSYNKIAPGNKAYIEWTDPITKAKINTIPTSAEFIKNLSSIRRSSNVGVYKDSGDKDEFAKKESVKKIAGYLSDYYNSANHIFSQEKKRKISIFRGIQAYNEIENVLKSKQIAPEYKNYFQYLKERITNQVQLLLTHQKSNIEFKLLYKQLNFTENETDNFEVFQKIIDEK.

The N-terminal stretch at 1–33 (MTRNKFIPNKFSIISFSVLLFAISSSQAIEVNA) is a signal peptide. The 214-residue stretch at 60-273 (KDSINNLVKT…MFEYMNKLEK (214 aa)) folds into the ATLF-like domain. Residues 294–349 (DVLKGEKALKASGLVPEHADAFKKIARELNTYILFRPVNKLATNLIKSGVATKGLN) form a catalytic CA1 region. The interval 350-489 (VHGKSSDWGP…NVEGVLKPLT (140 aa)) is catalytic CB. His351 (proton acceptor) is an active-site residue. The interval 490–622 (ADYDLFALAP…RFIEKNITGK (133 aa)) is catalytic CA2. 2 residues coordinate Mg(2+): Asp491 and Asp493. 3',5'-cyclic AMP-binding positions include Thr548 and 577–579 (HGT). His577 provides a ligand contact to Mg(2+). Residues 623–800 (DYLYYFNRSY…EVFQKIIDEK (178 aa)) are interaction with calmodulin.

It belongs to the adenylyl cyclase class-2 family. In terms of assembly, interacts (via ATLF domain) with the cleaved form of protective antigen (PA-63) anthrax toxin; interaction is required for EF translocation into the host cytoplasm. Requires Ca(2+) as cofactor.

Its subcellular location is the secreted. The protein resides in the host cytoplasm. It is found in the host cytosol. The enzyme catalyses ATP = 3',5'-cyclic AMP + diphosphate. Host calmodulin is an absolute requirement for its activation. Inhibited by ethyl 5-aminopyrazolo[1,5-a]quinazoline-3-carboxylate. Edema factor (EF), which constitutes one of the three proteins composing the anthrax toxin, causes edema in the host. Acts as a calmodulin-dependent adenylyl cyclase by converting ATP to cAMP, leading to dramatic elevation of intracellular cAMP levels in the host, thereby causing edema. EF is not toxic by itself and only acts as an edema factor when associated with protective antigen (PA) to form the edema toxin (EdTx). Required for the survival of germinated spores within macrophages at the early stages of infection. The polypeptide is Calmodulin-sensitive adenylate cyclase (cya) (Bacillus anthracis).